The following is an 82-amino-acid chain: Conotoxin Tx6.6 (82 aa).

Residues 1–19 form the signal peptide; sequence MKLTCVMIVAVLFLTAWTL. Residues 20–51 constitute a propeptide that is removed on maturation; it reads VMADDSNNGLANLFSKLRDEMEDPEGSKLEKK. Intrachain disulfides connect Cys53–Cys71, Cys60–Cys76, and Cys70–Cys81. Alanine amide; partial is present on Ala82.

This sequence belongs to the O1 superfamily. As to expression, expressed by the venom duct.

It localises to the secreted. Omega-conotoxins act at presynaptic membranes, they bind and block voltage-gated calcium channels (Cav). The chain is Conotoxin Tx6.6 from Conus textile (Cloth-of-gold cone).